The following is a 200-amino-acid chain: WASH complex subunit 3 (200 aa).

A coiled-coil region spans residues 56 to 76 (SLRIQQIETTLSILEAKLASI). Disordered stretches follow at residues 87 to 130 (VRAP…AENI) and 165 to 200 (DPNL…SFSD).

It belongs to the CCDC53 family. In terms of assembly, component of the WASH complex.

The polypeptide is WASH complex subunit 3 (Danio rerio (Zebrafish)).